The following is a 485-amino-acid chain: REST corepressor 1 (485 aa).

2 disordered regions span residues methionine 1–serine 26 and alanine 49–glutamine 110. Composition is skewed to low complexity over residues alanine 49 to alanine 64 and alanine 74 to serine 95. Positions proline 78–arginine 257 are interaction with HDAC1. In terms of domain architecture, ELM2 spans glycine 103–threonine 189. Residue lysine 122 forms a Glycyl lysine isopeptide (Lys-Gly) (interchain with G-Cter in SUMO2) linkage. The residue at position 127 (serine 127) is a Phosphoserine. An SANT 1 domain is found at proline 190–threonine 241. The stretch at serine 244–isoleucine 273 forms a coiled coil. Positions serine 244 to proline 314 are disordered. Serine 260 carries the post-translational modification Phosphoserine. Over residues aspartate 278–proline 288 the composition is skewed to basic and acidic residues. Residues valine 296–alanine 384 are interaction with KDM1A. Lysine 297 participates in a covalent cross-link: Glycyl lysine isopeptide (Lys-Gly) (interchain with G-Cter in SUMO2). Residues alanine 334–glycine 369 are a coiled coil. The 52-residue stretch at lysine 381–asparagine 432 folds into the SANT 2 domain. The tract at residues alanine 442 to serine 485 is disordered. Polar residues predominate over residues asparagine 450–asparagine 463. Position 460 is a phosphoserine (serine 460). Lysine 466 participates in a covalent cross-link: Glycyl lysine isopeptide (Lys-Gly) (interchain with G-Cter in SUMO2).

Belongs to the CoREST family. In terms of assembly, interacts directly with GFI1 and GFI1B in a RCOR/GFI/KDM1A/HDAC complex. Interacts with INMS1. Component of a BHC histone deacetylase complex that contains HDAC1, HDAC2, HMG20B/BRAF35, KDM1A, RCOR1/CoREST and PHF21A/BHC80. The BHC complex may also contain ZMYM2, ZNF217, ZMYM3, GSE1 and GTF2I. Interacts with REST. Interacts with the SMARCE1/BAF57, suggesting that the BHC complex may recruit the ATP-dependent chromatin-remodeling SWI-SNF complex. Interacts with SOX2. (Microbial infection) Interacts with herpes virus HSV-1 ICP0 protein; the interaction leads to the disruption of the BHC complex, thereby preventing the BHC complex from repressing transcription of viral genes. Post-translationally, phosphorylated by HSV-1 protein kinases in case of infection. As to expression, ubiquitously expressed.

It localises to the nucleus. Essential component of the BHC complex, a corepressor complex that represses transcription of neuron-specific genes in non-neuronal cells. The BHC complex is recruited at RE1/NRSE sites by REST and acts by deacetylating and demethylating specific sites on histones, thereby acting as a chromatin modifier. In the BHC complex, it serves as a molecular beacon for the recruitment of molecular machinery, including MeCP2 and SUV39H1, that imposes silencing across a chromosomal interval. Plays a central role in demethylation of Lys-4 of histone H3 by promoting demethylase activity of KDM1A on core histones and nucleosomal substrates. It also protects KDM1A from the proteasome. Component of a RCOR/GFI/KDM1A/HDAC complex that suppresses, via histone deacetylase (HDAC) recruitment, a number of genes implicated in multilineage blood cell development and controls hematopoietic differentiation. The sequence is that of REST corepressor 1 (RCOR1) from Homo sapiens (Human).